Consider the following 250-residue polypeptide: Transmembrane protein 106C (250 aa).

The disordered stretch occupies residues 1–25; it reads MGSQHSAAARPSSCRRKQEDDRDGL. The N-myristoyl glycine moiety is linked to residue Gly-2. Basic and acidic residues predominate over residues 16–25; sequence RKQEDDRDGL. A helical membrane pass occupies residues 87-107; the sequence is YVLLSILLCLLASGLVVFFLF. Residues Asn-173 and Asn-186 are each glycosylated (N-linked (GlcNAc...) asparagine). A helical transmembrane segment spans residues 197–217; it reads FSYVYFFCTVPEILVHNIVIF.

It belongs to the TMEM106 family. Interacts with TMEM106B.

The protein localises to the endoplasmic reticulum membrane. It localises to the membrane. The sequence is that of Transmembrane protein 106C (TMEM106C) from Homo sapiens (Human).